We begin with the raw amino-acid sequence, 112 residues long: Ferredoxin, plant-type (112 aa).

A 2Fe-2S ferredoxin-type domain is found at 6–97; the sequence is YEVFEVLSGQ…DLTIEYFRHV (92 aa). [2Fe-2S] cluster-binding residues include C41, C46, C49, and C81.

The protein belongs to the 2Fe2S plant-type ferredoxin family.

The protein operates within aromatic compound metabolism; catechol degradation. Its function is as follows. Ferredoxins are iron-sulfur proteins that transfer electrons in a wide variety of metabolic reactions. The protein is Ferredoxin, plant-type (xylT) of Pseudomonas putida (Arthrobacter siderocapsulatus).